The primary structure comprises 443 residues: Xaa-Pro dipeptidase (443 aa).

Mn(2+) contacts are provided by Asp-246, Asp-257, His-339, Glu-384, and Glu-423.

This sequence belongs to the peptidase M24B family. Bacterial-type prolidase subfamily. Requires Mn(2+) as cofactor.

The enzyme catalyses Xaa-L-Pro dipeptide + H2O = an L-alpha-amino acid + L-proline. Its function is as follows. Splits dipeptides with a prolyl residue in the C-terminal position. This Escherichia coli (strain SMS-3-5 / SECEC) protein is Xaa-Pro dipeptidase.